A 466-amino-acid chain; its full sequence is Putative ABC transporter ATP-binding protein MG065 (466 aa).

The region spanning 233–463 (IELKNVYKYI…NLNPKQVEEI (231 aa)) is the ABC transporter domain. Position 269 to 276 (269 to 276 (GPSGSGKT)) interacts with ATP.

It belongs to the ABC transporter superfamily.

This chain is Putative ABC transporter ATP-binding protein MG065, found in Mycoplasma genitalium (strain ATCC 33530 / DSM 19775 / NCTC 10195 / G37) (Mycoplasmoides genitalium).